The chain runs to 157 residues: Small ribosomal subunit protein uS7 (157 aa).

This sequence belongs to the universal ribosomal protein uS7 family. Part of the 30S ribosomal subunit. Contacts proteins S9 and S11.

Functionally, one of the primary rRNA binding proteins, it binds directly to 16S rRNA where it nucleates assembly of the head domain of the 30S subunit. Is located at the subunit interface close to the decoding center, probably blocks exit of the E-site tRNA. The chain is Small ribosomal subunit protein uS7 from Caulobacter vibrioides (strain ATCC 19089 / CIP 103742 / CB 15) (Caulobacter crescentus).